The primary structure comprises 255 residues: Small ribosomal subunit protein uS2 (255 aa).

Residues 230 to 255 form a disordered region; sequence QSSSGRDLGASSEVPVEPALEEAAEG.

The protein belongs to the universal ribosomal protein uS2 family.

The polypeptide is Small ribosomal subunit protein uS2 (Rhizobium etli (strain CIAT 652)).